The chain runs to 303 residues: GMP synthase [glutamine-hydrolyzing] subunit B (303 aa).

Positions 1–183 (MDVEKFVENA…LGLPKEISER (183 aa)) constitute a GMPS ATP-PPase domain. 28 to 34 (SGGVDSS) provides a ligand contact to ATP.

In terms of assembly, heterodimer composed of a glutamine amidotransferase subunit (A) and a GMP-binding subunit (B).

The catalysed reaction is XMP + L-glutamine + ATP + H2O = GMP + L-glutamate + AMP + diphosphate + 2 H(+). Its pathway is purine metabolism; GMP biosynthesis; GMP from XMP (L-Gln route): step 1/1. In terms of biological role, catalyzes the synthesis of GMP from XMP. The protein is GMP synthase [glutamine-hydrolyzing] subunit B (guaAB) of Archaeoglobus fulgidus (strain ATCC 49558 / DSM 4304 / JCM 9628 / NBRC 100126 / VC-16).